The primary structure comprises 119 residues: Phosphoribosyl-AMP cyclohydrolase (119 aa).

Residue Asp77 coordinates Mg(2+). A Zn(2+)-binding site is contributed by Cys78. Residues Asp79 and Asp81 each contribute to the Mg(2+) site. The Zn(2+) site is built by Cys94 and Cys101.

The protein belongs to the PRA-CH family. As to quaternary structure, homodimer. Requires Mg(2+) as cofactor. Zn(2+) is required as a cofactor.

The protein localises to the cytoplasm. The catalysed reaction is 1-(5-phospho-beta-D-ribosyl)-5'-AMP + H2O = 1-(5-phospho-beta-D-ribosyl)-5-[(5-phospho-beta-D-ribosylamino)methylideneamino]imidazole-4-carboxamide. It participates in amino-acid biosynthesis; L-histidine biosynthesis; L-histidine from 5-phospho-alpha-D-ribose 1-diphosphate: step 3/9. Functionally, catalyzes the hydrolysis of the adenine ring of phosphoribosyl-AMP. This chain is Phosphoribosyl-AMP cyclohydrolase, found in Cereibacter sphaeroides (strain ATCC 17025 / ATH 2.4.3) (Rhodobacter sphaeroides).